We begin with the raw amino-acid sequence, 137 residues long: Large ribosomal subunit protein uL16 (137 aa).

Over residues 1–17 the composition is skewed to basic residues; sequence MLSPKRTKFRKQQRGRM. The tract at residues 1–24 is disordered; that stretch reads MLSPKRTKFRKQQRGRMRGNANSG.

It belongs to the universal ribosomal protein uL16 family. Part of the 50S ribosomal subunit.

Its function is as follows. Binds 23S rRNA and is also seen to make contacts with the A and possibly P site tRNAs. The polypeptide is Large ribosomal subunit protein uL16 (Trichodesmium erythraeum (strain IMS101)).